The chain runs to 704 residues: Glycine--tRNA ligase beta subunit (704 aa).

It belongs to the class-II aminoacyl-tRNA synthetase family. Tetramer of two alpha and two beta subunits.

It localises to the cytoplasm. The enzyme catalyses tRNA(Gly) + glycine + ATP = glycyl-tRNA(Gly) + AMP + diphosphate. The sequence is that of Glycine--tRNA ligase beta subunit from Delftia acidovorans (strain DSM 14801 / SPH-1).